Reading from the N-terminus, the 401-residue chain is Probable E3 ubiquitin-protein ligase RHC2A (401 aa).

A disordered region spans residues 41–93 (TPSDSFTTTTTTQHRSPTRFPPPSSSSSTPSASMHADNSPTPTIVTRTRSNRS). The segment covering 76–93 (ADNSPTPTIVTRTRSNRS) has biased composition (polar residues). Residues 201 to 242 (CAVCKENFVLKSSAREMPCNHIYHPDCILPWLAIRNSCPVCR) form an RING-type; atypical zinc finger.

It carries out the reaction S-ubiquitinyl-[E2 ubiquitin-conjugating enzyme]-L-cysteine + [acceptor protein]-L-lysine = [E2 ubiquitin-conjugating enzyme]-L-cysteine + N(6)-ubiquitinyl-[acceptor protein]-L-lysine.. The protein operates within protein modification; protein ubiquitination. Its function is as follows. Probable E3 ubiquitin-protein ligase that may possess E3 ubiquitin ligase activity in vitro. The protein is Probable E3 ubiquitin-protein ligase RHC2A of Arabidopsis thaliana (Mouse-ear cress).